The sequence spans 467 residues: Fumarate hydratase class II (467 aa).

Residues 98–100 (SGT), arginine 126, 129–132 (HPND), 139–141 (SSN), and threonine 187 contribute to the substrate site. The active-site Proton donor/acceptor is histidine 188. Serine 318 is an active-site residue. Substrate is bound by residues serine 319 and 324 to 326 (KVN).

This sequence belongs to the class-II fumarase/aspartase family. Fumarase subfamily. Homotetramer.

Its subcellular location is the cytoplasm. It catalyses the reaction (S)-malate = fumarate + H2O. It participates in carbohydrate metabolism; tricarboxylic acid cycle; (S)-malate from fumarate: step 1/1. Involved in the TCA cycle. Catalyzes the stereospecific interconversion of fumarate to L-malate. The sequence is that of Fumarate hydratase class II from Salmonella typhi.